A 244-amino-acid polypeptide reads, in one-letter code: tRNA (guanine-N(1)-)-methyltransferase (244 aa).

S-adenosyl-L-methionine contacts are provided by residues G114 and 134 to 139 (IGDYVL). The interval 220 to 244 (RRPDLLEKAGASPGKSGSNFGKHDA) is disordered.

It belongs to the RNA methyltransferase TrmD family. In terms of assembly, homodimer.

The protein resides in the cytoplasm. It carries out the reaction guanosine(37) in tRNA + S-adenosyl-L-methionine = N(1)-methylguanosine(37) in tRNA + S-adenosyl-L-homocysteine + H(+). Specifically methylates guanosine-37 in various tRNAs. The sequence is that of tRNA (guanine-N(1)-)-methyltransferase from Rhizobium johnstonii (strain DSM 114642 / LMG 32736 / 3841) (Rhizobium leguminosarum bv. viciae).